The chain runs to 310 residues: Ribosomal RNA small subunit methyltransferase H (310 aa).

S-adenosyl-L-methionine contacts are provided by residues 32 to 34, Asp52, Phe79, Asp100, and Gln107; that span reads GGH.

This sequence belongs to the methyltransferase superfamily. RsmH family.

The protein localises to the cytoplasm. It carries out the reaction cytidine(1402) in 16S rRNA + S-adenosyl-L-methionine = N(4)-methylcytidine(1402) in 16S rRNA + S-adenosyl-L-homocysteine + H(+). Its function is as follows. Specifically methylates the N4 position of cytidine in position 1402 (C1402) of 16S rRNA. This is Ribosomal RNA small subunit methyltransferase H from Bacillus cereus (strain B4264).